Reading from the N-terminus, the 314-residue chain is Ribonuclease Z (314 aa).

His61, His63, Asp65, His66, His139, Asp211, and His269 together coordinate Zn(2+). Residue Asp65 is the Proton acceptor of the active site.

This sequence belongs to the RNase Z family. In terms of assembly, homodimer. Zn(2+) serves as cofactor.

The enzyme catalyses Endonucleolytic cleavage of RNA, removing extra 3' nucleotides from tRNA precursor, generating 3' termini of tRNAs. A 3'-hydroxy group is left at the tRNA terminus and a 5'-phosphoryl group is left at the trailer molecule.. Functionally, zinc phosphodiesterase, which displays some tRNA 3'-processing endonuclease activity. Probably involved in tRNA maturation, by removing a 3'-trailer from precursor tRNA. The protein is Ribonuclease Z of Gemmatimonas aurantiaca (strain DSM 14586 / JCM 11422 / NBRC 100505 / T-27).